A 558-amino-acid polypeptide reads, in one-letter code: Coiled-coil domain-containing protein 63 (558 aa).

The disordered stretch occupies residues 1 to 26 (MPTKKHRRKDPESPQEPSEKTKEQLV). Positions 9–26 (KDPESPQEPSEKTKEQLV) are enriched in basic and acidic residues. Coiled-coil stretches lie at residues 48-289 (NFRS…KAKK) and 339-416 (VTEL…VENL). The disordered stretch occupies residues 531-558 (HYATRESRNRDSMPEKGDELKSKKKVTV). The span at 533–551 (ATRESRNRDSMPEKGDELK) shows a compositional bias: basic and acidic residues.

Plays a role in spermiogenesis. Involved in the elongation of flagella and the formation of sperm heads. The polypeptide is Coiled-coil domain-containing protein 63 (Bos taurus (Bovine)).